The sequence spans 634 residues: UPF0329 protein ECU07_1850/ECU10_0050 (634 aa).

Composition is skewed to basic and acidic residues over residues 354–365 (REEREKREESKG) and 397–407 (GESKEEDRGEE). A disordered region spans residues 354-438 (REEREKREES…KGSGEKRISE (85 aa)). Residues 408-417 (GGVEAEDPLE) show a composition bias toward acidic residues.

This sequence belongs to the UPF0329 family.

The protein is UPF0329 protein ECU07_1850/ECU10_0050 of Encephalitozoon cuniculi (strain GB-M1) (Microsporidian parasite).